The chain runs to 356 residues: UDP-N-acetylglucosamine--N-acetylmuramyl-(pentapeptide) pyrophosphoryl-undecaprenol N-acetylglucosamine transferase (356 aa).

Residues 12 to 14 (TAG), Arg-166, Ser-196, and Gln-291 contribute to the UDP-N-acetyl-alpha-D-glucosamine site.

It belongs to the glycosyltransferase 28 family. MurG subfamily.

It localises to the cell membrane. It carries out the reaction di-trans,octa-cis-undecaprenyl diphospho-N-acetyl-alpha-D-muramoyl-L-alanyl-D-glutamyl-meso-2,6-diaminopimeloyl-D-alanyl-D-alanine + UDP-N-acetyl-alpha-D-glucosamine = di-trans,octa-cis-undecaprenyl diphospho-[N-acetyl-alpha-D-glucosaminyl-(1-&gt;4)]-N-acetyl-alpha-D-muramoyl-L-alanyl-D-glutamyl-meso-2,6-diaminopimeloyl-D-alanyl-D-alanine + UDP + H(+). The protein operates within cell wall biogenesis; peptidoglycan biosynthesis. In terms of biological role, cell wall formation. Catalyzes the transfer of a GlcNAc subunit on undecaprenyl-pyrophosphoryl-MurNAc-pentapeptide (lipid intermediate I) to form undecaprenyl-pyrophosphoryl-MurNAc-(pentapeptide)GlcNAc (lipid intermediate II). The sequence is that of UDP-N-acetylglucosamine--N-acetylmuramyl-(pentapeptide) pyrophosphoryl-undecaprenol N-acetylglucosamine transferase from Geobacillus thermodenitrificans (strain NG80-2).